Reading from the N-terminus, the 401-residue chain is Putative F-box/FBD/LRR-repeat protein At3g23955 (401 aa).

An F-box domain is found at 56–102 (VPARFQLPDPLLTQILNHLPTEEAVKTSVLSTRWRTLWLWVHNLELS). LRR repeat units follow at residues 128 to 152 (IESL…AFVK) and 275 to 296 (MSSL…FLRS). Residues 321-373 (IKRVSISSVPECLLSSLEFVEFKAPICGLAPEMMLVWYFLENSPTLKKLTLRL) enclose the FBD domain.

The protein is Putative F-box/FBD/LRR-repeat protein At3g23955 of Arabidopsis thaliana (Mouse-ear cress).